The sequence spans 953 residues: Vacuolar membrane protease (953 aa).

At 1–16 (MDQTKPPRRNPLAFTP) the chain is on the cytoplasmic side. The helical transmembrane segment at 17–37 (WPVTLITAVVYLAFVIPLLVI) threads the bilayer. Residues 38-382 (HHVVPSAPTS…TFVLFRLHTL (345 aa)) lie on the Vacuolar side of the membrane. N-linked (GlcNAc...) asparagine glycosylation is found at asparagine 53 and asparagine 115. Residues histidine 165 and aspartate 177 each contribute to the Zn(2+) site. The active-site Proton acceptor is the glutamate 211. Residues glutamate 212, glutamate 237, and histidine 310 each coordinate Zn(2+). Residues 383 to 403 (FALSVTLLVVAPIVLLLTSII) traverse the membrane as a helical segment. Topologically, residues 404-437 (LTKVDKMYLFRTSIRPEGSLEVLPLYGDRGVIRY) are cytoplasmic. Residues 438–458 (PFLLGIPTAVTIGLAYLLTKF) form a helical membrane-spanning segment. Topologically, residues 459–464 (NPYIVH) are vacuolar. Residues 465 to 485 (SSQYAVWSMMVSVWIFLAWFV) traverse the membrane as a helical segment. Residues 486–499 (SRVADFARPSAFHR) lie on the Cytoplasmic side of the membrane. Residues 500 to 520 (VYTLTWTFVVMWVLQVIATVY) form a helical membrane-spanning segment. Residues 521 to 524 (QDRW) lie on the Vacuolar side of the membrane. Residues 525 to 545 (ALGGSYFIFFAYAGTFLATWI) form a helical membrane-spanning segment. The Cytoplasmic portion of the chain corresponds to 546–650 (SYLELFALPR…SLPKWLWLLQ (105 aa)). The interval 570-599 (ASSHSSRRGLSEEDEEDEDEAPTESTSLLG) is disordered. Residues 581–591 (EEDEEDEDEAP) show a composition bias toward acidic residues. A helical membrane pass occupies residues 651-671 (FLLAAPIVLILVGPIALLLTG). Over 672–684 (SLHQTGQDGSSSL) the chain is Vacuolar. Residues 685–705 (FIYIAIVALTTLLLSPMLPFV) traverse the membrane as a helical segment. Residues 706–711 (HRCTYH) lie on the Cytoplasmic side of the membrane. The helical transmembrane segment at 712 to 732 (IPLFMLAVFAGTLIYNLVAFP) threads the bilayer. The Vacuolar segment spans residues 733 to 953 (FSDSNRLKLF…VEGRKSFEIA (221 aa)). Asparagine 779 is a glycosylation site (N-linked (GlcNAc...) asparagine).

It belongs to the peptidase M28 family. The cofactor is Zn(2+).

It localises to the vacuole membrane. May be involved in vacuolar sorting and osmoregulation. The chain is Vacuolar membrane protease from Emericella nidulans (strain FGSC A4 / ATCC 38163 / CBS 112.46 / NRRL 194 / M139) (Aspergillus nidulans).